Here is a 1076-residue protein sequence, read N- to C-terminus: Hormone-sensitive lipase (1076 aa).

Polar residues-rich tracts occupy residues 1–12 and 38–64; these read MEPGSKSVSRSD and ESKT…QETP. Disordered stretches follow at residues 1-198 and 229-250; these read MEPG…KSKQ and VTDS…PATM. Residues 65 to 77 are compositionally biased toward basic and acidic residues; the sequence is AQHDAESQKEPRA. The span at 94–116 shows a compositional bias: polar residues; that stretch reads APQQSPYIQRVLLTQQEAASQQG. Pro residues predominate over residues 140–149; that stretch reads GPGPGEPPPA. The span at 150–161 shows a compositional bias: low complexity; sequence QQEAESTPAAQA. Residues 172–198 show a composition bias toward polar residues; the sequence is PTESTSQETPEQSDKQTTPVQGAKSKQ. Residues 237–246 show a composition bias toward low complexity; the sequence is DVGSSSDTDS. The Involved in the stabilization of the negatively charged intermediate by the formation of the oxyanion hole signature appears at 651 to 653; it reads HGG. S725 is a catalytic residue. The tract at residues 838-930 is disordered; that stretch reads KSQKMSEPIA…EAEAKNELSP (93 aa). Phosphoserine is present on S853. Position 855 is a phosphoserine; by AMPK (S855). The segment covering 882–908 has biased composition (polar residues); that stretch reads RGNSETSSDTPEMSLSAETLSPSTPSD. 4 positions are modified to phosphoserine: S897, S929, S950, and S951. Residues D994 and H1024 contribute to the active site. The interval 1055 to 1076 is disordered; sequence AGAGPSGETGAAGVDGGCGGRH. Residues 1067 to 1076 are compositionally biased toward gly residues; sequence GVDGGCGGRH.

Belongs to the 'GDXG' lipolytic enzyme family. As to quaternary structure, monomer and homodimer. Interacts with CAVIN1 in the adipocyte cytoplasm. Interacts with PLIN5. Phosphorylation by AMPK reduces its translocation towards the lipid droplets. As to expression, testis.

It is found in the cell membrane. The protein resides in the membrane. The protein localises to the caveola. It localises to the cytoplasm. Its subcellular location is the cytosol. It is found in the lipid droplet. The catalysed reaction is a diacylglycerol + H2O = a monoacylglycerol + a fatty acid + H(+). It catalyses the reaction a triacylglycerol + H2O = a diacylglycerol + a fatty acid + H(+). The enzyme catalyses a monoacylglycerol + H2O = glycerol + a fatty acid + H(+). It carries out the reaction Hydrolyzes glycerol monoesters of long-chain fatty acids.. The catalysed reaction is 1,2-di-(9Z-octadecenoyl)-glycerol + (9Z)-octadecenoate + H(+) = 1,2,3-tri-(9Z-octadecenoyl)-glycerol + H2O. It catalyses the reaction 2,3-di-(9Z)-octadecenoyl-sn-glycerol + H2O = 2-(9Z-octadecenoyl)-glycerol + (9Z)-octadecenoate + H(+). The enzyme catalyses cholesteryl (9Z-octadecenoate) + H2O = cholesterol + (9Z)-octadecenoate + H(+). It carries out the reaction 1,2,3-tri-(9Z-octadecenoyl)-glycerol + H2O = di-(9Z)-octadecenoylglycerol + (9Z)-octadecenoate + H(+). The catalysed reaction is all-trans-retinyl hexadecanoate + H2O = all-trans-retinol + hexadecanoate + H(+). It catalyses the reaction 1,2-di-(9Z-octadecenoyl)-glycerol + H2O = (9Z-octadecenoyl)-glycerol + (9Z)-octadecenoate + H(+). The enzyme catalyses 2-(5Z,8Z,11Z,14Z-eicosatetraenoyl)-glycerol + H2O = glycerol + (5Z,8Z,11Z,14Z)-eicosatetraenoate + H(+). It carries out the reaction 1-(9Z-octadecenoyl)-glycerol + H2O = glycerol + (9Z)-octadecenoate + H(+). The catalysed reaction is 2-(9Z-octadecenoyl)-glycerol + H2O = glycerol + (9Z)-octadecenoate + H(+). It catalyses the reaction 1-O-hexadecyl-2-acetyl-sn-glycerol + H2O = 1-O-hexadecyl-sn-glycerol + acetate + H(+). The enzyme catalyses 1,2-di-(9Z-octadecenoyl)-sn-glycerol + H2O = (9Z-octadecenoyl)-glycerol + (9Z)-octadecenoate + H(+). It carries out the reaction 1,3-di-(9Z-octadecenoyl)-glycerol + H2O = 1-(9Z-octadecenoyl)-glycerol + (9Z)-octadecenoate + H(+). The catalysed reaction is 1,2-di-(9Z-octadecenoyl)-glycerol + H2O = 2-(9Z-octadecenoyl)-glycerol + (9Z)-octadecenoate + H(+). It functions in the pathway glycerolipid metabolism; triacylglycerol degradation. Retinyl ester hydrolase is inhibited by bis-p-nitrophenyl phosphate. Lipase with broad substrate specificity, catalyzing the hydrolysis of triacylglycerols (TAGs), diacylglycerols (DAGs), monoacylglycerols (MAGs), cholesteryl esters and retinyl esters. Shows a preferential hydrolysis of DAGs over TAGs and MAGs and preferentially hydrolyzes the fatty acid (FA) esters at the sn-3 position of the glycerol backbone in DAGs. Preferentially hydrolyzes FA esters at the sn-1 and sn-2 positions of the glycerol backbone in TAGs. Catalyzes the hydrolysis of 2-arachidonoylglycerol, an endocannabinoid and of 2-acetyl monoalkylglycerol ether, the penultimate precursor of the pathway for de novo synthesis of platelet-activating factor. In adipose tissue and heart, it primarily hydrolyzes stored triglycerides to free fatty acids, while in steroidogenic tissues, it principally converts cholesteryl esters to free cholesterol for steroid hormone production. In Homo sapiens (Human), this protein is Hormone-sensitive lipase (LIPE).